Here is a 91-residue protein sequence, read N- to C-terminus: Small ribosomal subunit protein bS16 (91 aa).

It belongs to the bacterial ribosomal protein bS16 family.

This is Small ribosomal subunit protein bS16 from Exiguobacterium sp. (strain ATCC BAA-1283 / AT1b).